A 176-amino-acid polypeptide reads, in one-letter code: uncharacterized protein (176 aa).

A compositionally biased stretch (polar residues) spans 15–28 (TSSNPPASASQSTG). 2 disordered regions span residues 15–100 (TSSN…TSAG) and 125–176 (ASLR…NLGA). Residues 43-52 (FIDKVTDKPS) show a composition bias toward basic and acidic residues.

This is an uncharacterized protein from Homo sapiens (Human).